Reading from the N-terminus, the 182-residue chain is Cytidylate kinase (182 aa).

Gly7 to Ser15 contributes to the ATP binding site.

It belongs to the cytidylate kinase family. Type 2 subfamily.

The protein localises to the cytoplasm. The enzyme catalyses CMP + ATP = CDP + ADP. It catalyses the reaction dCMP + ATP = dCDP + ADP. This chain is Cytidylate kinase (cmk), found in Sulfolobus acidocaldarius (strain ATCC 33909 / DSM 639 / JCM 8929 / NBRC 15157 / NCIMB 11770).